The following is a 428-amino-acid chain: Enolase 3 (428 aa).

Gln-163 is a binding site for (2R)-2-phosphoglycerate. The Proton donor role is filled by Glu-205. The Mg(2+) site is built by Asp-242, Glu-286, and Asp-313. Residues Lys-338, Arg-367, Ser-368, and Lys-389 each contribute to the (2R)-2-phosphoglycerate site. Residue Lys-338 is the Proton acceptor of the active site.

It belongs to the enolase family. Mg(2+) serves as cofactor.

It is found in the cytoplasm. The protein localises to the secreted. Its subcellular location is the cell surface. It carries out the reaction (2R)-2-phosphoglycerate = phosphoenolpyruvate + H2O. The protein operates within carbohydrate degradation; glycolysis; pyruvate from D-glyceraldehyde 3-phosphate: step 4/5. Functionally, catalyzes the reversible conversion of 2-phosphoglycerate (2-PG) into phosphoenolpyruvate (PEP). It is essential for the degradation of carbohydrates via glycolysis. The polypeptide is Enolase 3 (Lactobacillus johnsonii (strain CNCM I-12250 / La1 / NCC 533)).